The following is an 88-amino-acid chain: Prolevitide (88 aa).

The signal sequence occupies residues 1–20 (MYKGIFLCVLFAVICANSLA). Position 74 is a pyrrolidone carboxylic acid (glutamine 74). Residue glutamine 87 is modified to Glutamine amide.

Belongs to the gastrin/cholecystokinin family. As to expression, expressed by the skin glands.

It localises to the secreted. This is Prolevitide from Xenopus laevis (African clawed frog).